The following is a 145-amino-acid chain: Acidic phospholipase A2 (145 aa).

An N-terminal signal peptide occupies residues 1–19 (MNPAHLLILSAVCVSLLGA). A propeptide spanning residues 20-27 (ANVPPQHL) is cleaved from the precursor. 7 disulfides stabilise this stretch: Cys38/Cys97, Cys52/Cys144, Cys54/Cys70, Cys69/Cys125, Cys76/Cys118, Cys86/Cys111, and Cys104/Cys116. The Ca(2+) site is built by Tyr53, Gly55, and Gly57. Residue His73 is part of the active site. Asp74 is a binding site for Ca(2+). Residue Asp119 is part of the active site.

The protein belongs to the phospholipase A2 family. Group I subfamily. D49 sub-subfamily. The cofactor is Ca(2+). As to expression, expressed by the venom gland.

The protein resides in the secreted. It catalyses the reaction a 1,2-diacyl-sn-glycero-3-phosphocholine + H2O = a 1-acyl-sn-glycero-3-phosphocholine + a fatty acid + H(+). In terms of biological role, PLA2 catalyzes the calcium-dependent hydrolysis of the 2-acyl groups in 3-sn-phosphoglycerides. The polypeptide is Acidic phospholipase A2 (Bungarus multicinctus (Many-banded krait)).